We begin with the raw amino-acid sequence, 1058 residues long: Carbamoyl phosphate synthase large chain (1058 aa).

Residues 1-401 form a carboxyphosphate synthetic domain region; that stretch reads MPKRTDIQKI…SLLKACRSLE (401 aa). Residues Arg129, Arg169, Gly175, Gly176, Arg208, Ile210, Glu215, Gly241, Ile242, His243, Gln284, and Glu298 each contribute to the ATP site. One can recognise an ATP-grasp 1 domain in the interval 133-327; that stretch reads KQLMEELEQP…IAKLAAKIAV (195 aa). Positions 284, 298, and 300 each coordinate Mg(2+). Residues Gln284, Glu298, and Asn300 each contribute to the Mn(2+) site. An oligomerization domain region spans residues 402-546; that stretch reads IGVHHNEIPE…YSTYGWENES (145 aa). The interval 547-929 is carbamoyl phosphate synthetic domain; that stretch reads IRSDKESVLV…ALYKAFEASY (383 aa). The region spanning 671-861 is the ATP-grasp 2 domain; sequence EQALKELDIP…MAQVATKLIL (191 aa). 10 residues coordinate ATP: Arg707, Ser746, Ile748, Glu752, Gly777, Val778, His779, Ser780, Gln820, and Glu832. Positions 820, 832, and 834 each coordinate Mg(2+). 3 residues coordinate Mn(2+): Gln820, Glu832, and Asn834. Positions 930–1058 constitute an MGS-like domain; sequence LHLPTFGNVV…ESRSFVTEAI (129 aa). Residues 930-1058 are allosteric domain; the sequence is LHLPTFGNVV…ESRSFVTEAI (129 aa).

Belongs to the CarB family. As to quaternary structure, composed of two chains; the small (or glutamine) chain promotes the hydrolysis of glutamine to ammonia, which is used by the large (or ammonia) chain to synthesize carbamoyl phosphate. Tetramer of heterodimers (alpha,beta)4. Mg(2+) serves as cofactor. It depends on Mn(2+) as a cofactor.

It catalyses the reaction hydrogencarbonate + L-glutamine + 2 ATP + H2O = carbamoyl phosphate + L-glutamate + 2 ADP + phosphate + 2 H(+). The enzyme catalyses hydrogencarbonate + NH4(+) + 2 ATP = carbamoyl phosphate + 2 ADP + phosphate + 2 H(+). Its pathway is amino-acid biosynthesis; L-arginine biosynthesis; carbamoyl phosphate from bicarbonate: step 1/1. The protein operates within pyrimidine metabolism; UMP biosynthesis via de novo pathway; (S)-dihydroorotate from bicarbonate: step 1/3. Its function is as follows. Large subunit of the glutamine-dependent carbamoyl phosphate synthetase (CPSase). CPSase catalyzes the formation of carbamoyl phosphate from the ammonia moiety of glutamine, carbonate, and phosphate donated by ATP, constituting the first step of 2 biosynthetic pathways, one leading to arginine and/or urea and the other to pyrimidine nucleotides. The large subunit (synthetase) binds the substrates ammonia (free or transferred from glutamine from the small subunit), hydrogencarbonate and ATP and carries out an ATP-coupled ligase reaction, activating hydrogencarbonate by forming carboxy phosphate which reacts with ammonia to form carbamoyl phosphate. This chain is Carbamoyl phosphate synthase large chain, found in Streptococcus pneumoniae (strain Hungary19A-6).